The sequence spans 750 residues: Photosystem I P700 chlorophyll a apoprotein A1 (750 aa).

8 helical membrane-spanning segments follow: residues 72–95 (VFSAHFGQLAVIFIWLSGMYFHGA), 158–181 (LYTTAIGGLIAAGLMFFAGWFHYH), 197–221 (MNHHLAGLLGLGSLSWAGHQIHVSL), 293–311 (TVHHHVAIAVLFIVAGHMY), 348–371 (WHAQLGLNLALMGSLSIIVAHHMY), 387–413 (LSLFTHHMWIGGFCIVGGAAHAAIFMV), 435–457 (AIISHLNWVCIFLGFHSFGLYIH), and 532–550 (FLVHHIHAFTIHVTVLILL). Cys574 and Cys583 together coordinate [4Fe-4S] cluster. The next 2 helical transmembrane spans lie at 590 to 611 (HVFLGLFWMYNCLSIVIFHFSW) and 664 to 686 (LSAYGLMFLGAHFVWAFSLMFLF). His675 contributes to the chlorophyll a' binding site. Met683 and Tyr691 together coordinate chlorophyll a. Phylloquinone is bound at residue Trp692. A helical membrane pass occupies residues 724–744 (AVGVAHYLLGGIATTWAFFLA).

This sequence belongs to the PsaA/PsaB family. The PsaA/B heterodimer binds the P700 chlorophyll special pair and subsequent electron acceptors. PSI consists of a core antenna complex that captures photons, and an electron transfer chain that converts photonic excitation into a charge separation. The eukaryotic PSI reaction center is composed of at least 11 subunits. P700 is a chlorophyll a/chlorophyll a' dimer, A0 is one or more chlorophyll a, A1 is one or both phylloquinones and FX is a shared 4Fe-4S iron-sulfur center. serves as cofactor.

It is found in the plastid. Its subcellular location is the chloroplast thylakoid membrane. It carries out the reaction reduced [plastocyanin] + hnu + oxidized [2Fe-2S]-[ferredoxin] = oxidized [plastocyanin] + reduced [2Fe-2S]-[ferredoxin]. Functionally, psaA and PsaB bind P700, the primary electron donor of photosystem I (PSI), as well as the electron acceptors A0, A1 and FX. PSI is a plastocyanin-ferredoxin oxidoreductase, converting photonic excitation into a charge separation, which transfers an electron from the donor P700 chlorophyll pair to the spectroscopically characterized acceptors A0, A1, FX, FA and FB in turn. Oxidized P700 is reduced on the lumenal side of the thylakoid membrane by plastocyanin. This Mesostigma viride (Green alga) protein is Photosystem I P700 chlorophyll a apoprotein A1.